A 228-amino-acid polypeptide reads, in one-letter code: Large ribosomal subunit protein uL3 (228 aa).

Position 151 is an N5-methylglutamine (glutamine 151).

It belongs to the universal ribosomal protein uL3 family. Part of the 50S ribosomal subunit. Forms a cluster with proteins L14 and L19. Methylated by PrmB.

One of the primary rRNA binding proteins, it binds directly near the 3'-end of the 23S rRNA, where it nucleates assembly of the 50S subunit. This Rhizobium meliloti (strain 1021) (Ensifer meliloti) protein is Large ribosomal subunit protein uL3.